Here is a 207-residue protein sequence, read N- to C-terminus: MTDPNGPKDIPEQSAEAAEPVVSKPYIMPDDPEPDAVELLAKEAAEARDKMLRTLAEMENLRKRTTREVADARIYGVTAFARDVLEIADNLQRALDAVPAEARANAEPGLKALIDGVELTERSLINALEKNGVKKFDPSGQKFDPNFQQAMYEVPDASVPAGTVVQVVQAGFMLGERVLRPALVGVSKGGAKAAPAAAANGESNSAA.

Positions 1-33 are disordered; the sequence is MTDPNGPKDIPEQSAEAAEPVVSKPYIMPDDPE.

It belongs to the GrpE family. As to quaternary structure, homodimer.

The protein localises to the cytoplasm. In terms of biological role, participates actively in the response to hyperosmotic and heat shock by preventing the aggregation of stress-denatured proteins, in association with DnaK and GrpE. It is the nucleotide exchange factor for DnaK and may function as a thermosensor. Unfolded proteins bind initially to DnaJ; upon interaction with the DnaJ-bound protein, DnaK hydrolyzes its bound ATP, resulting in the formation of a stable complex. GrpE releases ADP from DnaK; ATP binding to DnaK triggers the release of the substrate protein, thus completing the reaction cycle. Several rounds of ATP-dependent interactions between DnaJ, DnaK and GrpE are required for fully efficient folding. This chain is Protein GrpE, found in Rhodopseudomonas palustris (strain BisA53).